We begin with the raw amino-acid sequence, 187 residues long: Elongation factor P (187 aa).

It belongs to the elongation factor P family.

It is found in the cytoplasm. Its pathway is protein biosynthesis; polypeptide chain elongation. Its function is as follows. Involved in peptide bond synthesis. Stimulates efficient translation and peptide-bond synthesis on native or reconstituted 70S ribosomes in vitro. Probably functions indirectly by altering the affinity of the ribosome for aminoacyl-tRNA, thus increasing their reactivity as acceptors for peptidyl transferase. This Sphingopyxis alaskensis (strain DSM 13593 / LMG 18877 / RB2256) (Sphingomonas alaskensis) protein is Elongation factor P.